We begin with the raw amino-acid sequence, 199 residues long: MKKILLTGFVPFLDNPINPTEEIVQGLHKKSVNGWEVVGEVLPVDFHVTGDHLVELIHKVQPSAIISLGLAAGRNRITPERIAINCNDGPVDNQGYKPDGEKIISDGPDGYFSSLPIKKMVKELENNGIPAKISNTAGAYLCNHVMYRALHEIEQQKLDIFSGFIHIPASHKLALTNNIPSFAQKDLQRAIEICIGCLD.

Residues Glu-80, Cys-142, and His-166 contribute to the active site.

It belongs to the peptidase C15 family. Homotetramer.

It localises to the cytoplasm. It catalyses the reaction Release of an N-terminal pyroglutamyl group from a polypeptide, the second amino acid generally not being Pro.. Functionally, removes 5-oxoproline from various penultimate amino acid residues except L-proline. The chain is Pyrrolidone-carboxylate peptidase from Oceanobacillus iheyensis (strain DSM 14371 / CIP 107618 / JCM 11309 / KCTC 3954 / HTE831).